The primary structure comprises 113 residues: N(2)-fixation sustaining protein CowN (113 aa).

This sequence belongs to the CowN family.

Is required to sustain N(2)-dependent growth in the presence of low levels of carbon monoxide (CO). Probably acts by protecting the N(2) fixation ability of the nitrogenase complex, which is inactivated in the presence of CO. This chain is N(2)-fixation sustaining protein CowN, found in Azoarcus sp. (strain BH72).